A 512-amino-acid polypeptide reads, in one-letter code: Cytochrome P450 72A11 (512 aa).

The chain crosses the membrane as a helical span at residues 2-22 (EISVASVTVSVAVVVVSWWVW). Cys460 contributes to the heme binding site.

Belongs to the cytochrome P450 family. Heme is required as a cofactor.

The protein resides in the membrane. The protein is Cytochrome P450 72A11 (CYP72A11) of Arabidopsis thaliana (Mouse-ear cress).